The primary structure comprises 171 residues: Protein-export protein SecB (171 aa).

It belongs to the SecB family. In terms of assembly, homotetramer, a dimer of dimers. One homotetramer interacts with 1 SecA dimer.

It is found in the cytoplasm. One of the proteins required for the normal export of preproteins out of the cell cytoplasm. It is a molecular chaperone that binds to a subset of precursor proteins, maintaining them in a translocation-competent state. It also specifically binds to its receptor SecA. The chain is Protein-export protein SecB from Gluconacetobacter diazotrophicus (strain ATCC 49037 / DSM 5601 / CCUG 37298 / CIP 103539 / LMG 7603 / PAl5).